The sequence spans 581 residues: Leucine-rich repeat transmembrane neuronal protein 3 (581 aa).

The first 30 residues, 1 to 30 (MGFNVIRLLSGSAVALVIAPTVLLTMLSSA), serve as a signal peptide directing secretion. The region spanning 31–61 (ERGCPKGCRCEGKMVYCESQKLQEIPSSISA) is the LRRNT domain. Topologically, residues 31-419 (ERGCPKGCRC…ADAEHISFHK (389 aa)) are extracellular. LRR repeat units lie at residues 63–83 (CLGLSLRYNSLQKLKYNQFKG), 86–107 (QLTWLYLDHNHISNIDENAFNG), 110–131 (RLKELILSSNRISYFLNNTFRP), 134–155 (NLRNLDLSYNQLHSLGSEQFRG), 158–179 (KLLSLHLRSNSLRTIPVRIFQD), 182–203 (NLELLDLGYNRIRSLARNVFAG), 206–226 (RLKELHLEHNQFSKLNLALFP), 230–251 (SLQNLYLQWNKISVIGQTMSWT), 254–275 (SLQRLDLSGNEIEAFSGPSVFQ), and 279–300 (NLQRLNLDSNKLTFIGQEILDS). N126 is a glycosylation site (N-linked (GlcNAc...) asparagine). The region spanning 312 to 363 (NIWECSRNICSLVNWLKSFKGLRENTIICASPKELQGVNVIDAVKNYSICGK) is the LRRCT domain. A glycan (N-linked (GlcNAc...) asparagine) is linked at N357. The disordered stretch occupies residues 377–408 (KPTFKPKLPRPKHESKPPLPPTVGATEPGPET). Residues 420–440 (IIAGSVALFLSVLVILLVIYV) traverse the membrane as a helical segment. Over 441-581 (SWKRYPASMK…RISDHKQQLA (141 aa)) the chain is Cytoplasmic.

The protein belongs to the LRRTM family. Expressed in neuronal tissues.

The protein resides in the cell membrane. The protein localises to the postsynaptic cell membrane. Functionally, exhibits a limited synaptogenic activity in vitro, restricted to excitatory presynaptic differentiation. May play a role in the development and maintenance of the vertebrate nervous system. The protein is Leucine-rich repeat transmembrane neuronal protein 3 (LRRTM3) of Homo sapiens (Human).